Consider the following 165-residue polypeptide: RNA pyrophosphohydrolase (165 aa).

A Nudix hydrolase domain is found at 6–149 (GYRPNVGIII…KQSVYHQALT (144 aa)). A Nudix box motif is present at residues 38–59 (GGVRENETPQQAVFRELKEEVG).

Belongs to the Nudix hydrolase family. RppH subfamily. The cofactor is a divalent metal cation.

Functionally, accelerates the degradation of transcripts by removing pyrophosphate from the 5'-end of triphosphorylated RNA, leading to a more labile monophosphorylated state that can stimulate subsequent ribonuclease cleavage. The protein is RNA pyrophosphohydrolase of Hydrogenovibrio crunogenus (strain DSM 25203 / XCL-2) (Thiomicrospira crunogena).